Reading from the N-terminus, the 95-residue chain is Large ribosomal subunit protein bL21 (95 aa).

It belongs to the bacterial ribosomal protein bL21 family. Part of the 50S ribosomal subunit. Contacts protein L20.

In terms of biological role, this protein binds to 23S rRNA in the presence of protein L20. This Chlorobaculum tepidum (strain ATCC 49652 / DSM 12025 / NBRC 103806 / TLS) (Chlorobium tepidum) protein is Large ribosomal subunit protein bL21.